Consider the following 90-residue polypeptide: UPF0297 protein BH1268 (90 aa).

The protein belongs to the UPF0297 family.

The sequence is that of UPF0297 protein BH1268 from Halalkalibacterium halodurans (strain ATCC BAA-125 / DSM 18197 / FERM 7344 / JCM 9153 / C-125) (Bacillus halodurans).